Reading from the N-terminus, the 262-residue chain is Pyridoxine 5'-phosphate synthase (262 aa).

N6 provides a ligand contact to 3-amino-2-oxopropyl phosphate. D8–H9 provides a ligand contact to 1-deoxy-D-xylulose 5-phosphate. Position 17 (R17) interacts with 3-amino-2-oxopropyl phosphate. H43 functions as the Proton acceptor in the catalytic mechanism. R45 and H50 together coordinate 1-deoxy-D-xylulose 5-phosphate. Residue E70 is the Proton acceptor of the active site. Position 102 (T102) interacts with 1-deoxy-D-xylulose 5-phosphate. The active-site Proton donor is the H215. Residues G216 and G237–H238 each bind 3-amino-2-oxopropyl phosphate.

It belongs to the PNP synthase family. In terms of assembly, homooctamer; tetramer of dimers.

It is found in the cytoplasm. The enzyme catalyses 3-amino-2-oxopropyl phosphate + 1-deoxy-D-xylulose 5-phosphate = pyridoxine 5'-phosphate + phosphate + 2 H2O + H(+). Its pathway is cofactor biosynthesis; pyridoxine 5'-phosphate biosynthesis; pyridoxine 5'-phosphate from D-erythrose 4-phosphate: step 5/5. Catalyzes the complicated ring closure reaction between the two acyclic compounds 1-deoxy-D-xylulose-5-phosphate (DXP) and 3-amino-2-oxopropyl phosphate (1-amino-acetone-3-phosphate or AAP) to form pyridoxine 5'-phosphate (PNP) and inorganic phosphate. In Helicobacter acinonychis (strain Sheeba), this protein is Pyridoxine 5'-phosphate synthase.